Consider the following 434-residue polypeptide: Adenylosuccinate synthetase (434 aa).

Residues 22 to 28 (GDEGKGK) and 50 to 52 (GHT) each bind GTP. The active-site Proton acceptor is Asp23. Asp23 and Gly50 together coordinate Mg(2+). Residues 23–26 (DEGK), 48–51 (NAGH), Thr139, Arg153, Gln234, Thr249, and Arg313 contribute to the IMP site. The Proton donor role is filled by His51. 309–315 (ATTGRKR) is a substrate binding site. GTP is bound by residues Arg315, 341–343 (KLD), and 423–425 (SVG).

This sequence belongs to the adenylosuccinate synthetase family. As to quaternary structure, homodimer. Mg(2+) serves as cofactor.

It is found in the cytoplasm. The catalysed reaction is IMP + L-aspartate + GTP = N(6)-(1,2-dicarboxyethyl)-AMP + GDP + phosphate + 2 H(+). It functions in the pathway purine metabolism; AMP biosynthesis via de novo pathway; AMP from IMP: step 1/2. Its function is as follows. Plays an important role in the de novo pathway of purine nucleotide biosynthesis. Catalyzes the first committed step in the biosynthesis of AMP from IMP. The chain is Adenylosuccinate synthetase from Pelodictyon phaeoclathratiforme (strain DSM 5477 / BU-1).